Here is a 226-residue protein sequence, read N- to C-terminus: UPF0173 metal-dependent hydrolase Fnod_0635 (226 aa).

Belongs to the UPF0173 family.

In Fervidobacterium nodosum (strain ATCC 35602 / DSM 5306 / Rt17-B1), this protein is UPF0173 metal-dependent hydrolase Fnod_0635.